Reading from the N-terminus, the 321-residue chain is Mas-related G-protein coupled receptor member D (321 aa).

At 1–8 the chain is on the extracellular side; it reads MNSTLDSS. N2 carries an N-linked (GlcNAc...) asparagine glycan. A helical membrane pass occupies residues 9 to 29; that stretch reads PAPGLTISPTMDLVTWIYFSV. A topological domain (cytoplasmic) is located at residue T30. Residues 31–51 traverse the membrane as a helical segment; sequence FLAMATCVGGMAGNSLVIWLL. The Extracellular segment spans residues 52–72; that stretch reads SCNGMQRSPFCVYVLNLAVAD. Residues 73 to 93 form a helical membrane-spanning segment; the sequence is FLFLFCMASMLSLETGPLLIV. Residues 94 to 146 lie on the Cytoplasmic side of the membrane; sequence NISAKIYEGMRRIKYFAYTAGLSLLTAISTQRCLSVLFPIWYKCHRPRHLSSV. A helical transmembrane segment spans residues 147–167; the sequence is VSGALWALAFLMNFLASFFCV. Residues 168-181 are Extracellular-facing; sequence QFWHPNKHQCFKVD. Residues 182-202 traverse the membrane as a helical segment; the sequence is IVFNSLILGIFMPVMILTSTI. At 203-220 the chain is on the cytoplasmic side; that stretch reads LFIRVRKNSLMQRRRPRR. The chain crosses the membrane as a helical span at residues 221–241; the sequence is LYVVILTSILVFLTCSLPLGI. The Extracellular portion of the chain corresponds to 242–260; sequence NWFLLYWVDVKRDVRLLYS. A helical membrane pass occupies residues 261–281; it reads CVSRFSSSLSSSANPVIYFLV. Over 282–321 the chain is Cytoplasmic; it reads GSQKSHRLQESLGAVLGRALRDEPEPEGRETPSTCTNDGV. The span at 302-311 shows a compositional bias: basic and acidic residues; that stretch reads RDEPEPEGRE. Residues 302 to 321 form a disordered region; the sequence is RDEPEPEGRETPSTCTNDGV. Residues 312-321 show a composition bias toward polar residues; that stretch reads TPSTCTNDGV.

This sequence belongs to the G-protein coupled receptor 1 family. Mas subfamily. Expressed in a subset of sensory neurons that includes nociceptors. Expressed in the subclass of non-peptidergic sensory neurons that are IB4(+) and VR1(-).

The protein resides in the cell membrane. May regulate nociceptor function and/or development, including the sensation or modulation of pain. Functions as a specific membrane receptor for beta-alanine. The receptor couples with G-protein G(q) and G(i). The chain is Mas-related G-protein coupled receptor member D (Mrgprd) from Mus musculus (Mouse).